A 231-amino-acid chain; its full sequence is Chromosome partition protein MukE (231 aa).

The disordered stretch occupies residues 211–231 (SLLADEEEQDYNEQAELEGEA). Residues 214 to 231 (ADEEEQDYNEQAELEGEA) show a composition bias toward acidic residues.

Belongs to the MukE family. In terms of assembly, interacts, and probably forms a ternary complex, with MukF and MukB. The complex formation is stimulated by calcium or magnesium.

It localises to the cytoplasm. The protein localises to the nucleoid. Its function is as follows. Involved in chromosome condensation, segregation and cell cycle progression. May participate in facilitating chromosome segregation by condensation DNA from both sides of a centrally located replisome during cell division. Probably acts via its interaction with MukB and MukF. This is Chromosome partition protein MukE from Vibrio vulnificus (strain CMCP6).